The sequence spans 73 residues: Serine rich endogenous peptide 14 (73 aa).

The N-terminal stretch at 1–31 is a signal peptide; it reads MAAKTSNLVALLLSLFLLLLSISSQVGLGEA. Residues 44–73 form a disordered region; the sequence is VSHPSPPPPHRSMAPPIFVPPSTSHKGQGP. An SCOOP motif motif is present at residues 59-73; it reads PIFVPPSTSHKGQGP. Positions 64–73 are enriched in polar residues; it reads PSTSHKGQGP. Positions 65-67 match the SxS motif essential for MIK2 binding motif; the sequence is STS.

The protein belongs to the serine rich endogenous peptide (SCOOP) phytocytokine family. In terms of assembly, interacts with MIK2 (via extracellular leucine-rich repeat domain); this interaction triggers the formation of complex between MIK2 and the BAK1/SERK3 and SERK4 coreceptors, and subsequent BAK1 activation by phosphorylation. In terms of tissue distribution, mostly expressed in seedlings shoots and leaves, and, to a lower extent, in roots, stems, siliques, seeds and flowers.

The protein resides in the cell membrane. It localises to the secreted. It is found in the extracellular space. The protein localises to the apoplast. Functionally, brassicaceae-specific phytocytokine (plant endogenous peptide released into the apoplast) perceived by MIK2 in a BAK1/SERK3 and SERK4 coreceptors-dependent manner, that modulates various physiological and antimicrobial processes including growth prevention and reactive oxygen species (ROS) response regulation. Inhibits root growth and regulates root meristems. Prevents general growth and development. Exhibits antibacterial effects against Pseudomonas syringae pv. tomato DC3000, Ralstonia solanacearum, Bacillus subtilis and Agrobacterium tumefaciens, thus being an antimicrobial peptide (AMP). This Arabidopsis thaliana (Mouse-ear cress) protein is Serine rich endogenous peptide 14.